The sequence spans 152 residues: Transcription elongation factor Spt5 (152 aa).

Positions P94–V124 constitute a KOW domain.

It belongs to the archaeal Spt5 family. In terms of assembly, heterodimer composed of Spt4 and Spt5. Interacts with RNA polymerase (RNAP) independently of nucleic acids. Forms a homodimer in solution.

In terms of biological role, stimulates transcription elongation. The chain is Transcription elongation factor Spt5 from Pyrococcus furiosus (strain ATCC 43587 / DSM 3638 / JCM 8422 / Vc1).